The sequence spans 184 residues: Ribulose bisphosphate carboxylase small subunit, chloroplastic 2 (184 aa).

The N-terminal 59 residues, Met1–Gln59, are a transit peptide targeting the chloroplast.

It belongs to the RuBisCO small chain family. Heterohexadecamer of 8 large and 8 small subunits.

It localises to the plastid. The protein resides in the chloroplast. Functionally, ruBisCO catalyzes two reactions: the carboxylation of D-ribulose 1,5-bisphosphate, the primary event in carbon dioxide fixation, as well as the oxidative fragmentation of the pentose substrate. Both reactions occur simultaneously and in competition at the same active site. Although the small subunit is not catalytic it is essential for maximal activity. This chain is Ribulose bisphosphate carboxylase small subunit, chloroplastic 2, found in Amaranthus hypochondriacus (Prince-of-Wales feather).